The primary structure comprises 322 residues: Lipoyl synthase (322 aa).

The tract at residues 1–24 (MVTVLDTVSKPRPRHPEKAHRPDQ) is disordered. A compositionally biased stretch (basic and acidic residues) spans 14–24 (RHPEKAHRPDQ). [4Fe-4S] cluster-binding residues include Cys59, Cys64, Cys70, Cys85, Cys89, Cys92, and Ser298. Positions 71–287 (WDKKHATFMI…ETIAYTKGFL (217 aa)) constitute a Radical SAM core domain.

It belongs to the radical SAM superfamily. Lipoyl synthase family. [4Fe-4S] cluster is required as a cofactor.

The protein resides in the cytoplasm. The catalysed reaction is [[Fe-S] cluster scaffold protein carrying a second [4Fe-4S](2+) cluster] + N(6)-octanoyl-L-lysyl-[protein] + 2 oxidized [2Fe-2S]-[ferredoxin] + 2 S-adenosyl-L-methionine + 4 H(+) = [[Fe-S] cluster scaffold protein] + N(6)-[(R)-dihydrolipoyl]-L-lysyl-[protein] + 4 Fe(3+) + 2 hydrogen sulfide + 2 5'-deoxyadenosine + 2 L-methionine + 2 reduced [2Fe-2S]-[ferredoxin]. It participates in protein modification; protein lipoylation via endogenous pathway; protein N(6)-(lipoyl)lysine from octanoyl-[acyl-carrier-protein]: step 2/2. Its function is as follows. Catalyzes the radical-mediated insertion of two sulfur atoms into the C-6 and C-8 positions of the octanoyl moiety bound to the lipoyl domains of lipoate-dependent enzymes, thereby converting the octanoylated domains into lipoylated derivatives. The chain is Lipoyl synthase from Chelativorans sp. (strain BNC1).